A 144-amino-acid chain; its full sequence is Large ribosomal subunit protein uL15 (144 aa).

Positions 1–13 are enriched in basic and acidic residues; it reads MKLNELKPAEGSR. The segment at 1 to 47 is disordered; sequence MKLNELKPAEGSRKVRNRVGRGDSSGNGKTAGRGQKGQKARSKTRLG. The span at 23-35 shows a compositional bias: gly residues; sequence DSSGNGKTAGRGQ.

This sequence belongs to the universal ribosomal protein uL15 family. As to quaternary structure, part of the 50S ribosomal subunit.

Binds to the 23S rRNA. The chain is Large ribosomal subunit protein uL15 from Levilactobacillus brevis (strain ATCC 367 / BCRC 12310 / CIP 105137 / JCM 1170 / LMG 11437 / NCIMB 947 / NCTC 947) (Lactobacillus brevis).